The sequence spans 251 residues: Capsid protein (251 aa).

The short motif at 3–20 (KRDLPWRSMAGTSKVSRN) is the Bipartite nuclear localization signal element. Residues 35–49 (KAAEWVNRPMYRKPR) carry the Nuclear localization signal motif. A zinc finger lies at 63 to 80 (CEGPCKVQSFEQRHDISH). The Nuclear export signal signature appears at 96-117 (ITHRVGKRFCVKSVYILGKIWM). The Bipartite nuclear localization signal motif lies at 195 to 242 (KRFWKVNNHVVYNHQEAGKYENHTENALLLYMACTHASNPVYATLKIR).

It belongs to the geminiviridae capsid protein family. As to quaternary structure, homomultimer. Binds to single-stranded and double-stranded viral DNA. Interacts (via nuclear localization signals) with host importin alpha-1a.

The protein resides in the virion. It localises to the host nucleus. Its function is as follows. Encapsidates the viral DNA into characteristic twinned ('geminate') particles. Binds the genomic viral ssDNA and shuttles it into and out of the cell nucleus. The CP of bipartite geminiviruses is not required for cell-to-cell or systemic movement. This is Capsid protein from Tomato mottle virus (isolate Florida) (ToMoV).